Consider the following 285-residue polypeptide: Bifunctional protein FolD 2 (285 aa).

Residues 164–166 (GRS), Ser-189, and Val-230 each bind NADP(+).

This sequence belongs to the tetrahydrofolate dehydrogenase/cyclohydrolase family. As to quaternary structure, homodimer.

It carries out the reaction (6R)-5,10-methylene-5,6,7,8-tetrahydrofolate + NADP(+) = (6R)-5,10-methenyltetrahydrofolate + NADPH. It catalyses the reaction (6R)-5,10-methenyltetrahydrofolate + H2O = (6R)-10-formyltetrahydrofolate + H(+). It participates in one-carbon metabolism; tetrahydrofolate interconversion. Catalyzes the oxidation of 5,10-methylenetetrahydrofolate to 5,10-methenyltetrahydrofolate and then the hydrolysis of 5,10-methenyltetrahydrofolate to 10-formyltetrahydrofolate. This is Bifunctional protein FolD 2 from Geobacter metallireducens (strain ATCC 53774 / DSM 7210 / GS-15).